Here is a 538-residue protein sequence, read N- to C-terminus: Chaperonin GroEL (538 aa).

Residues 29–32, 86–90, glycine 413, 476–478, and aspartate 492 contribute to the ATP site; these read TIGP, DGTTT, and NAA.

The protein belongs to the chaperonin (HSP60) family. Forms a cylinder of 14 subunits composed of two heptameric rings stacked back-to-back. Interacts with the co-chaperonin GroES.

Its subcellular location is the cytoplasm. It carries out the reaction ATP + H2O + a folded polypeptide = ADP + phosphate + an unfolded polypeptide.. Its function is as follows. Together with its co-chaperonin GroES, plays an essential role in assisting protein folding. The GroEL-GroES system forms a nano-cage that allows encapsulation of the non-native substrate proteins and provides a physical environment optimized to promote and accelerate protein folding. This chain is Chaperonin GroEL, found in Staphylococcus aureus (strain Mu3 / ATCC 700698).